The following is a 188-amino-acid chain: 2-amino-4-hydroxy-6-hydroxymethyldihydropteridine pyrophosphokinase (188 aa).

Belongs to the HPPK family.

The catalysed reaction is 6-hydroxymethyl-7,8-dihydropterin + ATP = (7,8-dihydropterin-6-yl)methyl diphosphate + AMP + H(+). The protein operates within cofactor biosynthesis; tetrahydrofolate biosynthesis; 2-amino-4-hydroxy-6-hydroxymethyl-7,8-dihydropteridine diphosphate from 7,8-dihydroneopterin triphosphate: step 4/4. Its function is as follows. Catalyzes the transfer of pyrophosphate from adenosine triphosphate (ATP) to 6-hydroxymethyl-7,8-dihydropterin, an enzymatic step in folate biosynthesis pathway. The polypeptide is 2-amino-4-hydroxy-6-hydroxymethyldihydropteridine pyrophosphokinase (folK) (Mycobacterium tuberculosis (strain ATCC 25618 / H37Rv)).